Consider the following 263-residue polypeptide: Trem-like transcript 4 protein (263 aa).

A signal peptide spans 1–28; it reads MAWRYSQLLLVPVQLVFLASVCCPGVWG. Positions 29–132 constitute an Ig-like V-type domain; it reads STVSEELHRM…LREVTVLRNI (104 aa). Residues 29-200 are Extracellular-facing; the sequence is STVSEELHRM…GWTSPGLLVS (172 aa). Cys-47 and Cys-116 are joined by a disulfide. The N-linked (GlcNAc...) asparagine glycan is linked to Asn-100. The disordered stretch occupies residues 168–191; that stretch reads SPEETTDSSINGTGHRNQSSSSPG. Residues 201–221 traverse the membrane as a helical segment; that stretch reads VQYGLLLLKALMLSVFCVLLC. Residues 222 to 263 lie on the Cytoplasmic side of the membrane; it reads WRSGQGREYMAETMELSKLPHISKSLDTVSHISGYEKKANWY.

As to quaternary structure, interacts with TYROBP/DAP12. In terms of tissue distribution, predominantly expressed in spleen, with highest levels on selected populations of macrophages, including red pulp macrophages, and on subsets of dendritic cells (DC), mostly on CD8alpha(+) DC (at protein level). Also expressed on blood and spleen Ly6C(low) monocytes (at protein level). Not expressed on lymphocytes or granulocytes (at protein level).

It localises to the cell membrane. Functionally, positively regulates Toll-like receptor signaling via TLR7, TLR9 and TLR13 in neutrophils and splenic macrophages. Regulates TLR7 signaling by controlling ligand-induced recruitment of TLR7 from the endoplasmic reticulum to endosomes and lysosomes. Positively regulates Toll-like receptor TLR9-induced production of inflammatory cytokines but is dispensable for IFNB1 production. Involved in the anti-viral response to several viruses including influenza virus, vesicular stomatitis virus and cytomegalovirus. Binds to late apoptotic, and necrotic cells, but not living or early apoptotic cells, but is not essential for uptake of dying cells by dendritic cells (DCs). Does not bind nucleic acids. May participate in antigen presentation. The sequence is that of Trem-like transcript 4 protein (Treml4) from Mus musculus (Mouse).